Reading from the N-terminus, the 341-residue chain is Very-long-chain 3-oxoacyl-CoA reductase (341 aa).

Residues 15 to 35 form a helical membrane-spanning segment; the sequence is VVTAFSVIGIVFTILKFTSFA. NADP(+)-binding residues include V61, D115, N142, K177, Y216, K220, V249, and S251. The active-site Proton donor is Y216. K220 functions as the Lowers pKa of active site Tyr in the catalytic mechanism.

It belongs to the short-chain dehydrogenases/reductases (SDR) family.

Its subcellular location is the endoplasmic reticulum membrane. It catalyses the reaction a very-long-chain (3R)-3-hydroxyacyl-CoA + NADP(+) = a very-long-chain 3-oxoacyl-CoA + NADPH + H(+). It functions in the pathway lipid metabolism; fatty acid biosynthesis. Its function is as follows. Component of the microsomal membrane bound fatty acid elongation system, which produces the 26-carbon very long-chain fatty acids (VLCFA) from palmitate. Catalyzes the reduction of the 3-ketoacyl-CoA intermediate that is formed in each cycle of fatty acid elongation. VLCFAs serve as precursors for ceramide and sphingolipids. This is Very-long-chain 3-oxoacyl-CoA reductase from Schizosaccharomyces pombe (strain 972 / ATCC 24843) (Fission yeast).